Consider the following 431-residue polypeptide: Glutamate--tRNA ligase 2 (431 aa).

Residues 6-16 (PSPTGDMHIGN) carry the 'HIGH' region motif. Residues 235-239 (KMSKR) carry the 'KMSKS' region motif. Residue lysine 238 participates in ATP binding.

Belongs to the class-I aminoacyl-tRNA synthetase family. Glutamate--tRNA ligase type 1 subfamily. In terms of assembly, monomer.

It is found in the cytoplasm. The catalysed reaction is tRNA(Glu) + L-glutamate + ATP = L-glutamyl-tRNA(Glu) + AMP + diphosphate. Catalyzes the attachment of glutamate to tRNA(Glu) in a two-step reaction: glutamate is first activated by ATP to form Glu-AMP and then transferred to the acceptor end of tRNA(Glu). This is Glutamate--tRNA ligase 2 from Campylobacter jejuni subsp. doylei (strain ATCC BAA-1458 / RM4099 / 269.97).